The primary structure comprises 388 residues: Pentatricopeptide repeat-containing protein 2, mitochondrial (388 aa).

One copy of the PPR repeat lies at 166 to 200 (TSFNILMDMLFIKGKYKSALQVLIEMKNQDVKFTK). Serine 382 carries the post-translational modification Phosphoserine.

It belongs to the PTCD2 family.

The protein localises to the mitochondrion. In terms of biological role, involved in mitochondrial RNA maturation and mitochondrial respiratory chain function. The protein is Pentatricopeptide repeat-containing protein 2, mitochondrial (PTCD2) of Homo sapiens (Human).